The chain runs to 342 residues: Probable dual-specificity RNA methyltransferase RlmN (342 aa).

Catalysis depends on glutamate 91, which acts as the Proton acceptor. The Radical SAM core domain maps to 97–327; that stretch reads YKHGNSICVS…TTIRREMGAD (231 aa). An intrachain disulfide couples cysteine 104 to cysteine 332. Residues cysteine 111, cysteine 115, and cysteine 118 each coordinate [4Fe-4S] cluster. Residues 158–159, serine 190, 213–215, and asparagine 289 each bind S-adenosyl-L-methionine; these read GE and SLH. The S-methylcysteine intermediate role is filled by cysteine 332.

This sequence belongs to the radical SAM superfamily. RlmN family. It depends on [4Fe-4S] cluster as a cofactor.

The protein resides in the cytoplasm. The enzyme catalyses adenosine(2503) in 23S rRNA + 2 reduced [2Fe-2S]-[ferredoxin] + 2 S-adenosyl-L-methionine = 2-methyladenosine(2503) in 23S rRNA + 5'-deoxyadenosine + L-methionine + 2 oxidized [2Fe-2S]-[ferredoxin] + S-adenosyl-L-homocysteine. The catalysed reaction is adenosine(37) in tRNA + 2 reduced [2Fe-2S]-[ferredoxin] + 2 S-adenosyl-L-methionine = 2-methyladenosine(37) in tRNA + 5'-deoxyadenosine + L-methionine + 2 oxidized [2Fe-2S]-[ferredoxin] + S-adenosyl-L-homocysteine. Its function is as follows. Specifically methylates position 2 of adenine 2503 in 23S rRNA and position 2 of adenine 37 in tRNAs. The polypeptide is Probable dual-specificity RNA methyltransferase RlmN (Clostridium botulinum (strain Loch Maree / Type A3)).